Here is a 352-residue protein sequence, read N- to C-terminus: Large ribosomal subunit protein uL10 (352 aa).

A compositionally biased stretch (acidic residues) spans 286–297; it reads DDEDALPEELQD. The disordered stretch occupies residues 286–352; it reads DDEDALPEEL…GAEGLGEMFG (67 aa). Residues 299-310 show a composition bias toward low complexity; that stretch reads DAPAAPAGGEAD. Residues 324–340 are compositionally biased toward acidic residues; the sequence is EADDADDSDDDDDDDDG. Gly residues predominate over residues 343–352; the sequence is GAEGLGEMFG.

This sequence belongs to the universal ribosomal protein uL10 family. In terms of assembly, part of the 50S ribosomal subunit. Forms part of the ribosomal stalk which helps the ribosome interact with GTP-bound translation factors. Forms a heptameric L10(L12)2(L12)2(L12)2 complex, where L10 forms an elongated spine to which the L12 dimers bind in a sequential fashion.

Forms part of the ribosomal stalk, playing a central role in the interaction of the ribosome with GTP-bound translation factors. This Halobacterium salinarum (strain ATCC 700922 / JCM 11081 / NRC-1) (Halobacterium halobium) protein is Large ribosomal subunit protein uL10.